The chain runs to 345 residues: Uroporphyrinogen decarboxylase (345 aa).

Substrate contacts are provided by residues 27 to 31 (RQAGR), phenylalanine 46, aspartate 76, tyrosine 152, serine 207, and histidine 320.

It belongs to the uroporphyrinogen decarboxylase family. Homodimer.

The protein resides in the cytoplasm. The enzyme catalyses uroporphyrinogen III + 4 H(+) = coproporphyrinogen III + 4 CO2. It functions in the pathway porphyrin-containing compound metabolism; protoporphyrin-IX biosynthesis; coproporphyrinogen-III from 5-aminolevulinate: step 4/4. Catalyzes the decarboxylation of four acetate groups of uroporphyrinogen-III to yield coproporphyrinogen-III. In Geobacillus kaustophilus (strain HTA426), this protein is Uroporphyrinogen decarboxylase.